The sequence spans 267 residues: Cytochrome b (267 aa).

Helical transmembrane passes span 33–53 (FGSL…FLAM), 77–98 (WLIR…FIHV), 113–133 (WNIG…GYVL), and 178–198 (FFAF…VHLL). H83 and H97 together coordinate heme b. Positions 182 and 196 each coordinate heme b. Residue H201 participates in a ubiquinone binding. Residues 226 to 246 (IKDLLGVILLLMVLMILVLFF) traverse the membrane as a helical segment.

The protein belongs to the cytochrome b family. The cytochrome bc1 complex contains 11 subunits: 3 respiratory subunits (MT-CYB, CYC1 and UQCRFS1), 2 core proteins (UQCRC1 and UQCRC2) and 6 low-molecular weight proteins (UQCRH/QCR6, UQCRB/QCR7, UQCRQ/QCR8, UQCR10/QCR9, UQCR11/QCR10 and a cleavage product of UQCRFS1). This cytochrome bc1 complex then forms a dimer. Heme b is required as a cofactor.

It is found in the mitochondrion inner membrane. Functionally, component of the ubiquinol-cytochrome c reductase complex (complex III or cytochrome b-c1 complex) that is part of the mitochondrial respiratory chain. The b-c1 complex mediates electron transfer from ubiquinol to cytochrome c. Contributes to the generation of a proton gradient across the mitochondrial membrane that is then used for ATP synthesis. The protein is Cytochrome b (MT-CYB) of Abrothrix olivaceus (Olive grass mouse).